A 185-amino-acid polypeptide reads, in one-letter code: Adenylyl-sulfate kinase (185 aa).

13 to 20 lines the ATP pocket; that stretch reads GLSGAGKS. Ser86 acts as the Phosphoserine intermediate in catalysis.

The protein belongs to the APS kinase family.

It carries out the reaction adenosine 5'-phosphosulfate + ATP = 3'-phosphoadenylyl sulfate + ADP + H(+). The protein operates within sulfur metabolism; hydrogen sulfide biosynthesis; sulfite from sulfate: step 2/3. In terms of biological role, catalyzes the synthesis of activated sulfate. The protein is Adenylyl-sulfate kinase of Myxococcus xanthus (strain DK1622).